A 59-amino-acid chain; its full sequence is Dimethylamine corrinoid protein (59 aa).

The region spanning T1 to A59 is the B12-binding domain.

Belongs to the methylamine corrinoid protein family.

It functions in the pathway one-carbon metabolism; methanogenesis from dimethylamine. Acts as a methyl group carrier between MtbB and MtbA. This Methanosarcina thermophila protein is Dimethylamine corrinoid protein (mtbC).